The sequence spans 105 residues: Spermatogenesis-associated protein 8 (105 aa).

In terms of tissue distribution, expressed at high levels in adult testis, at moderate levels in sperm and at low levels in fetal testis. Not detected in other tissues.

This is Spermatogenesis-associated protein 8 (SPATA8) from Homo sapiens (Human).